Reading from the N-terminus, the 445-residue chain is 6-phosphogluconate dehydrogenase, decarboxylating (445 aa).

NADP(+) contacts are provided by residues 1–4, 22–24, 63–65, and Asn91; these read AVMG, NRS, and VKA. Residues Asn91 and 117–119 each bind substrate; that span reads SGG. Lys172 serves as the catalytic Proton acceptor. 175 to 176 lines the substrate pocket; sequence HN. Glu179 serves as the catalytic Proton donor. Positions 180, 249, 276, 434, and 440 each coordinate substrate.

It belongs to the 6-phosphogluconate dehydrogenase family. In terms of assembly, homodimer.

The catalysed reaction is 6-phospho-D-gluconate + NADP(+) = D-ribulose 5-phosphate + CO2 + NADPH. It functions in the pathway carbohydrate degradation; pentose phosphate pathway; D-ribulose 5-phosphate from D-glucose 6-phosphate (oxidative stage): step 3/3. Its function is as follows. Catalyzes the oxidative decarboxylation of 6-phosphogluconate to ribulose 5-phosphate and CO(2), with concomitant reduction of NADP to NADPH. In Citrobacter freundii, this protein is 6-phosphogluconate dehydrogenase, decarboxylating (gnd).